Consider the following 360-residue polypeptide: Photosystem II protein D1 (360 aa).

Helical transmembrane passes span 29–46, 118–133, and 142–156; these read YIGWFGVLMIPTLLTATT, HFLLGVCGWIGREWEF, and WISVAFTAPVAAASA. Residue His-118 coordinates chlorophyll a. Pheophytin a is bound at residue Trp-126. Positions 170 and 189 each coordinate [CaMn4O5] cluster. The helical transmembrane segment at 197 to 218 threads the bilayer; sequence FHQLGVAGVFGGSLFSAMHGSL. His-198 is a chlorophyll a binding site. A quinone-binding positions include His-215 and 264–265; that span reads SF. A Fe cation-binding site is contributed by His-215. His-272 contributes to the Fe cation binding site. The chain crosses the membrane as a helical span at residues 274-288; the sequence is FLGLWPVVGIWFTAL. [CaMn4O5] cluster is bound by residues His-332, Glu-333, Asp-342, and Ala-344. Residues 345 to 360 constitute a propeptide that is removed on maturation; that stretch reads SGESLPVALTAPAVIG.

It belongs to the reaction center PufL/M/PsbA/D family. As to quaternary structure, PSII is composed of 1 copy each of membrane proteins PsbA, PsbB, PsbC, PsbD, PsbE, PsbF, PsbH, PsbI, PsbJ, PsbK, PsbL, PsbM, PsbT, PsbX, PsbY, PsbZ, Psb30/Ycf12, at least 3 peripheral proteins of the oxygen-evolving complex and a large number of cofactors. It forms dimeric complexes. The cofactor is The D1/D2 heterodimer binds P680, chlorophylls that are the primary electron donor of PSII, and subsequent electron acceptors. It shares a non-heme iron and each subunit binds pheophytin, quinone, additional chlorophylls, carotenoids and lipids. D1 provides most of the ligands for the Mn4-Ca-O5 cluster of the oxygen-evolving complex (OEC). There is also a Cl(-1) ion associated with D1 and D2, which is required for oxygen evolution. The PSII complex binds additional chlorophylls, carotenoids and specific lipids.. In terms of processing, tyr-161 forms a radical intermediate that is referred to as redox-active TyrZ, YZ or Y-Z. C-terminally processed by CTPA; processing is essential to allow assembly of the oxygen-evolving complex and thus photosynthetic growth.

The protein localises to the plastid. It is found in the chloroplast thylakoid membrane. It catalyses the reaction 2 a plastoquinone + 4 hnu + 2 H2O = 2 a plastoquinol + O2. Photosystem II (PSII) is a light-driven water:plastoquinone oxidoreductase that uses light energy to abstract electrons from H(2)O, generating O(2) and a proton gradient subsequently used for ATP formation. It consists of a core antenna complex that captures photons, and an electron transfer chain that converts photonic excitation into a charge separation. The D1/D2 (PsbA/PsbD) reaction center heterodimer binds P680, the primary electron donor of PSII as well as several subsequent electron acceptors. This is Photosystem II protein D1 from Guillardia theta (Cryptophyte).